The following is a 1297-amino-acid chain: Cingulin-like protein 1 (1297 aa).

The segment at 1-550 is head; the sequence is MELYFGEYQH…ELTQQTNEET (550 aa). The ZIM motif lies at 37–51; it reads AGSYGVSIRVQGIDG. Residues Ser113, Ser203, and Ser257 each carry the phosphoserine modification. 4 disordered regions span residues 161–208, 245–306, 364–396, and 428–467; these read NEVN…TSED, GVGE…TPTS, KPGLQRRGRSGKRNRINPDDRKRSRSVDSAFPF, and QRSVAQEHRGKHSPSSPPAKLQGAQGAHPKPPLQNKDGKV. Polar residues predominate over residues 197–206; sequence YGSQPNSPTS. Positions 268–283 are enriched in basic and acidic residues; the sequence is ETKKNRPDVLPFRRQD. A phosphoserine mark is found at Ser284, Ser298, and Ser299. Residues 297 to 306 are compositionally biased toward low complexity; it reads SSSSSTTPTS. Basic residues predominate over residues 367-378; sequence LQRRGRSGKRNR. Over residues 379–389 the composition is skewed to basic and acidic residues; sequence INPDDRKRSRS. Residues Ser389 and Ser392 each carry the phosphoserine modification. Phosphoserine is present on Ser482. The disordered stretch occupies residues 586 to 608; it reads SRAAGSAQGSNQAPNSPSEGNSL. Residues 592-608 show a composition bias toward polar residues; that stretch reads AQGSNQAPNSPSEGNSL. Residues 604–1251 are a coiled coil; the sequence is EGNSLLDQKN…LQGQLNSLKK (648 aa). Residues Ser678 and Ser704 each carry the phosphoserine modification. The tail stretch occupies residues 1259–1297; it reads SSKVLDDSDDDDLSSDAGSLYEAPLSYAFPKDSTIASQI.

This sequence belongs to the cingulin family. In terms of assembly, homodimer or oligomer. Interacts with CD2AP and SH3BP1; probably part of a complex at cell junctions. In terms of tissue distribution, widely expressed. Highly expressed in the kidney and lung.

It localises to the cell junction. It is found in the tight junction. Functionally, may be involved in anchoring the apical junctional complex, especially tight junctions, to actin-based cytoskeletons. The sequence is that of Cingulin-like protein 1 from Mus musculus (Mouse).